Consider the following 787-residue polypeptide: Aconitate hydratase, mitochondrial (787 aa).

The N-terminal 33 residues, 1–33 (MISTRLARAGALAPKSRLFLGTRAFATVGDSPL), are a transit peptide targeting the mitochondrion. Residues Gln104 and 197-199 (DSH) contribute to the substrate site. Residues Cys390, Cys453, and Cys456 each coordinate [4Fe-4S] cluster. Substrate is bound by residues Arg479 and Arg484. Residues 529–559 (LQPPTGEGLPAKGYDPGRDTYQAPPADRSSV) are disordered. Substrate-binding positions include Arg612 and 675-676 (SR).

It belongs to the aconitase/IPM isomerase family. Requires [4Fe-4S] cluster as cofactor.

The protein resides in the mitochondrion. The catalysed reaction is citrate = D-threo-isocitrate. It carries out the reaction (2R)-homocitrate = cis-homoaconitate + H2O. The protein operates within carbohydrate metabolism; tricarboxylic acid cycle; isocitrate from oxaloacetate: step 2/2. It participates in amino-acid biosynthesis; L-lysine biosynthesis via AAA pathway; L-alpha-aminoadipate from 2-oxoglutarate: step 2/5. In terms of biological role, catalyzes the isomerization of citrate to isocitrate via cis-aconitate, a step in the citric acid cycle. Also catalyzes the reversible dehydration of (R)-homocitrate to cis-homoaconitate, a step in the alpha-aminoadipate pathway for lysine biosynthesis. The sequence is that of Aconitate hydratase, mitochondrial (acoA) from Aspergillus fumigatus (strain ATCC MYA-4609 / CBS 101355 / FGSC A1100 / Af293) (Neosartorya fumigata).